Here is a 28-residue protein sequence, read N- to C-terminus: Trypsin inhibitor 2 (28 aa).

Cystine bridges form between Cys-3-Cys-20, Cys-10-Cys-22, and Cys-16-Cys-27.

The protein belongs to the protease inhibitor I7 (squash-type serine protease inhibitor) family.

It is found in the secreted. Inhibits trypsin. The protein is Trypsin inhibitor 2 of Momordica charantia (Bitter gourd).